Reading from the N-terminus, the 744-residue chain is Cytoskeleton-associated protein 2-like (744 aa).

Disordered regions lie at residues 35–56 (YLKA…GPKK), 76–169 (LQSR…THVE), 182–216 (KENL…SSLA), 317–337 (TVTE…VLQG), and 428–452 (NKTA…GAQT). 3 stretches are compositionally biased toward polar residues: residues 76–86 (LQSRPANITRS), 102–129 (SESV…STDG), and 137–154 (GSLN…VTDQ). A Glycyl lysine isopeptide (Lys-Gly) (interchain with G-Cter in SUMO1); alternate cross-link involves residue Lys195. A Glycyl lysine isopeptide (Lys-Gly) (interchain with G-Cter in SUMO2); alternate cross-link involves residue Lys195. Residues 199 to 216 (ESWTINKPQTNQTKSSLA) show a composition bias toward polar residues. Ser744 is subject to Phosphoserine.

It belongs to the CKAP2 family. In terms of processing, ubiquitinated by the anaphase promoting complex/cyclosome (APC/C).

It localises to the cytoplasm. The protein localises to the cytoskeleton. The protein resides in the spindle pole. Microtubule-associated protein required for mitotic spindle formation and cell-cycle progression in neural progenitor cells. The chain is Cytoskeleton-associated protein 2-like (CKAP2L) from Bos taurus (Bovine).